A 341-amino-acid chain; its full sequence is Methionine import ATP-binding protein MetN 3 (341 aa).

Residues 2-241 (ILLENVKKIY…PKQDITKRFV (240 aa)) form the ABC transporter domain. Residue 38–45 (GYSGAGKS) coordinates ATP.

The protein belongs to the ABC transporter superfamily. Methionine importer (TC 3.A.1.24) family. As to quaternary structure, the complex is composed of two ATP-binding proteins (MetN), two transmembrane proteins (MetI) and a solute-binding protein (MetQ).

It localises to the cell membrane. The enzyme catalyses L-methionine(out) + ATP + H2O = L-methionine(in) + ADP + phosphate + H(+). It carries out the reaction D-methionine(out) + ATP + H2O = D-methionine(in) + ADP + phosphate + H(+). Its function is as follows. Part of the ABC transporter complex MetNIQ involved in methionine import. Responsible for energy coupling to the transport system. This chain is Methionine import ATP-binding protein MetN 3, found in Bacillus cereus (strain ATCC 14579 / DSM 31 / CCUG 7414 / JCM 2152 / NBRC 15305 / NCIMB 9373 / NCTC 2599 / NRRL B-3711).